The following is a 483-amino-acid chain: MAYIEGNTGKWEYVIGLEIHAQISSKSKLFSGSSTIFAANPNSQVSYVDAAMPGMLPVLNKHCVHQAIKTGLGLKAKINKYSVFDRKNYFYADLPQGYQISQFYYPIVQNGTMEIPTSTGDLKTIRINRLHLEQDAGKSMHDQSPHYSFIDLNRAGIGLMEIVTEPDISSPEEAAEFVKKLRNLLRYIGSCDGDMEKGSMRCDANISVRRSGEPLGTRCEIKNINSIRNIIKAIEFEAKRQVDLLESGEEIIQETRLFNADSGETRTMRLKEEALDYRYFPDPDLLPLVISDELINELKANLPELPDQKIEKYTKEFSLSKYDAEVIVADESVAEYFEKAANECNPKMLTNWLTSELFGQLNKASIGINECKITPSNFAKLVKLIENDTISGKIAKTVFEIMFETGKAPDKIVEEKGLVQVSDNNVLNTVIDEVIAENPESVEGYRSGKDKLFGFFVGQVMKKTGGKANPTLVNQLLKEKLSS.

This sequence belongs to the GatB/GatE family. GatB subfamily. In terms of assembly, heterotrimer of A, B and C subunits.

The enzyme catalyses L-glutamyl-tRNA(Gln) + L-glutamine + ATP + H2O = L-glutaminyl-tRNA(Gln) + L-glutamate + ADP + phosphate + H(+). The catalysed reaction is L-aspartyl-tRNA(Asn) + L-glutamine + ATP + H2O = L-asparaginyl-tRNA(Asn) + L-glutamate + ADP + phosphate + 2 H(+). Its function is as follows. Allows the formation of correctly charged Asn-tRNA(Asn) or Gln-tRNA(Gln) through the transamidation of misacylated Asp-tRNA(Asn) or Glu-tRNA(Gln) in organisms which lack either or both of asparaginyl-tRNA or glutaminyl-tRNA synthetases. The reaction takes place in the presence of glutamine and ATP through an activated phospho-Asp-tRNA(Asn) or phospho-Glu-tRNA(Gln). The polypeptide is Aspartyl/glutamyl-tRNA(Asn/Gln) amidotransferase subunit B (Rickettsia africae (strain ESF-5)).